The following is a 31-amino-acid chain: Electron transfer flavoprotein-ubiquinone oxidoreductase (31 aa).

Residue 11–25 (VVIVGAGGAGLSAAI) participates in FAD binding.

Monomer. Requires [4Fe-4S] cluster as cofactor. The cofactor is FAD.

It carries out the reaction a ubiquinone + reduced [electron-transfer flavoprotein] = a ubiquinol + oxidized [electron-transfer flavoprotein] + H(+). Accepts electrons from ETF and reduces ubiquinone. The protein is Electron transfer flavoprotein-ubiquinone oxidoreductase of Paracoccus denitrificans.